A 283-amino-acid polypeptide reads, in one-letter code: 2-heptyl-4(1H)-quinolone synthase subunit PqsB (283 aa).

Belongs to the thiolase-like superfamily. FabH family. As to quaternary structure, forms a tight complex with PqsC.

It localises to the cytoplasm. With respect to regulation, activity of the complex is inhibited by 2-aminoacetophenone (2-AA). In terms of biological role, required for the biosynthesis of the quorum-sensing signaling molecules 2-heptyl-4(1H)-quinolone (HHQ) and 2-heptyl-3-hydroxy-4(1H)-quinolone (Pseudomonas quinolone signal or PQS), which are important for biofilm formation and virulence. The PqsC/PqsB complex catalyzes the condensation of 2-aminobenzoylacetate (2-ABA) and octanoyl-CoA to form HHQ. PqsB, together with PqsC, catalyzes the coupling of 2-ABA with the octanoate group, leading to decarboxylation and dehydration, and resulting in closure of the quinoline ring. PqsB is probably required for the proper folding of PqsC rather than for a direct enzymatic role in the process. In Pseudomonas aeruginosa (strain ATCC 15692 / DSM 22644 / CIP 104116 / JCM 14847 / LMG 12228 / 1C / PRS 101 / PAO1), this protein is 2-heptyl-4(1H)-quinolone synthase subunit PqsB.